The primary structure comprises 413 residues: Histidine--tRNA ligase (413 aa).

The protein belongs to the class-II aminoacyl-tRNA synthetase family. As to quaternary structure, homodimer.

Its subcellular location is the cytoplasm. The catalysed reaction is tRNA(His) + L-histidine + ATP = L-histidyl-tRNA(His) + AMP + diphosphate + H(+). The polypeptide is Histidine--tRNA ligase (Fusobacterium nucleatum subsp. nucleatum (strain ATCC 25586 / DSM 15643 / BCRC 10681 / CIP 101130 / JCM 8532 / KCTC 2640 / LMG 13131 / VPI 4355)).